Consider the following 484-residue polypeptide: tRNA sulfurtransferase (484 aa).

The THUMP domain maps to 63-167 (REMIERLCCT…DQRLFVVHRQ (105 aa)). ATP is bound by residues 185 to 186 (LM), K267, G289, and Q298. C346 and C457 are joined by a disulfide. The 79-residue stretch at 405 to 483 (ALAGQIVLDI…GHANVRVYRP (79 aa)) folds into the Rhodanese domain. C457 acts as the Cysteine persulfide intermediate in catalysis.

This sequence belongs to the ThiI family.

The protein localises to the cytoplasm. It catalyses the reaction [ThiI sulfur-carrier protein]-S-sulfanyl-L-cysteine + a uridine in tRNA + 2 reduced [2Fe-2S]-[ferredoxin] + ATP + H(+) = [ThiI sulfur-carrier protein]-L-cysteine + a 4-thiouridine in tRNA + 2 oxidized [2Fe-2S]-[ferredoxin] + AMP + diphosphate. The enzyme catalyses [ThiS sulfur-carrier protein]-C-terminal Gly-Gly-AMP + S-sulfanyl-L-cysteinyl-[cysteine desulfurase] + AH2 = [ThiS sulfur-carrier protein]-C-terminal-Gly-aminoethanethioate + L-cysteinyl-[cysteine desulfurase] + A + AMP + 2 H(+). It functions in the pathway cofactor biosynthesis; thiamine diphosphate biosynthesis. Catalyzes the ATP-dependent transfer of a sulfur to tRNA to produce 4-thiouridine in position 8 of tRNAs, which functions as a near-UV photosensor. Also catalyzes the transfer of sulfur to the sulfur carrier protein ThiS, forming ThiS-thiocarboxylate. This is a step in the synthesis of thiazole, in the thiamine biosynthesis pathway. The sulfur is donated as persulfide by IscS. The protein is tRNA sulfurtransferase of Azotobacter vinelandii (strain DJ / ATCC BAA-1303).